The sequence spans 400 residues: Ribosomal RNA large subunit methyltransferase I (400 aa).

A PUA domain is found at 6-84 (FPRLVLAKGR…NEAIDSAFFE (79 aa)).

Belongs to the methyltransferase superfamily. RlmI family.

The protein localises to the cytoplasm. The catalysed reaction is cytidine(1962) in 23S rRNA + S-adenosyl-L-methionine = 5-methylcytidine(1962) in 23S rRNA + S-adenosyl-L-homocysteine + H(+). Specifically methylates the cytosine at position 1962 (m5C1962) of 23S rRNA. This Klebsiella pneumoniae subsp. pneumoniae (strain ATCC 700721 / MGH 78578) protein is Ribosomal RNA large subunit methyltransferase I.